A 698-amino-acid chain; its full sequence is Probable threonine--tRNA ligase 2, cytoplasmic (698 aa).

Positions 38 to 100 constitute a TGS domain; that stretch reads GGGNIKLNDG…EMSGKDYNIE (63 aa). The interval 541 to 560 is disordered; sequence NNNNNNNNNNEEINDNNNNN.

Belongs to the class-II aminoacyl-tRNA synthetase family.

It is found in the cytoplasm. The catalysed reaction is tRNA(Thr) + L-threonine + ATP = L-threonyl-tRNA(Thr) + AMP + diphosphate + H(+). This chain is Probable threonine--tRNA ligase 2, cytoplasmic (thrS2), found in Dictyostelium discoideum (Social amoeba).